The primary structure comprises 392 residues: uncharacterized protein (392 aa).

This sequence belongs to the peptidase M24 family.

This is an uncharacterized protein from Sinorhizobium fredii (strain NBRC 101917 / NGR234).